We begin with the raw amino-acid sequence, 375 residues long: Neuropeptide Y receptor type 4-2 (375 aa).

Residues 1–39 lie on the Extracellular side of the membrane; sequence MNTSHLLALLLPKSPQGENRSKPLGTPYNFSEHCQDSVD. N-linked (GlcNAc...) asparagine glycosylation is found at Asn-2, Asn-19, and Asn-29. The chain crosses the membrane as a helical span at residues 40–60; the sequence is VMVFIVTSYSIETVVGVLGNL. Over 61–87 the chain is Cytoplasmic; that stretch reads CLMCVTVRQKEKANVTNLLIANLAFSD. Residues 88–108 traverse the membrane as a helical segment; that stretch reads FLMCLLCQPLTAVYTIMDYWI. Residues 109-116 lie on the Extracellular side of the membrane; it reads FGETLCKM. A disulfide bond links Cys-114 and Cys-201. Residues 117–137 form a helical membrane-spanning segment; sequence SAFIQCMSVTVSILSLVLVAL. Over 138–155 the chain is Cytoplasmic; the sequence is ERHQLIINPTGWKPSISQ. The chain crosses the membrane as a helical span at residues 156–176; the sequence is AYLGIVLIWVIACVLSLPFLA. Residues 177–212 are Extracellular-facing; the sequence is NSILENVFHKNHSKALEFLADKVVCTESWPLAHHRT. Residue Asn-187 is glycosylated (N-linked (GlcNAc...) asparagine). Residues 213-233 traverse the membrane as a helical segment; it reads IYTTFLLLFQYCLPLGFILVC. At 234–263 the chain is on the cytoplasmic side; it reads YARIYRRLQRQGRVFHKGTYSLRAGHMKQV. Residues 264-284 traverse the membrane as a helical segment; that stretch reads NVVLVVMVVAFAVLWLPLHVF. Over 285 to 301 the chain is Extracellular; that stretch reads NSLEDWHHEAIPICHGN. The chain crosses the membrane as a helical span at residues 302–322; it reads LIFLVCHLLAMASTCVNPFIY. Residues 323-375 lie on the Cytoplasmic side of the membrane; it reads GFLNTNFKKEIKALVLTCQQSAPLEESEHLPLSTVHTEVSKGSLRLSGRSNPI. Residue Cys-340 is the site of S-palmitoyl cysteine attachment.

It belongs to the G-protein coupled receptor 1 family.

Its subcellular location is the cell membrane. In terms of biological role, g protein-coupled receptor for PPY/pancreatic polypeptide/PP, NPY/neuropeptide Y and PYY/peptide YY that is negatively coupled to cAMP. The rank order of affinity for these polypeptides and their derivatives is PP, PP (2-36) and [Ile-31, Gln-34] PP &gt; [Pro-34] PYY &gt; PYY and [Leu-31, Pro-34] NPY &gt; NPY &gt; PYY (3-36) and NPY (2-36) &gt; PP (13-36) &gt; PP (31-36) &gt; NPY free acid. The chain is Neuropeptide Y receptor type 4-2 from Homo sapiens (Human).